We begin with the raw amino-acid sequence, 458 residues long: tRNA-2-methylthio-N(6)-dimethylallyladenosine synthase (458 aa).

In terms of domain architecture, MTTase N-terminal spans lysine 15–glutamine 134. [4Fe-4S] cluster-binding residues include cysteine 24, cysteine 60, cysteine 97, cysteine 175, cysteine 179, and cysteine 182. The 233-residue stretch at glutamine 161–arginine 393 folds into the Radical SAM core domain. The TRAM domain maps to arginine 396–asparagine 457.

The protein belongs to the methylthiotransferase family. MiaB subfamily. Monomer. The cofactor is [4Fe-4S] cluster.

It is found in the cytoplasm. It carries out the reaction N(6)-dimethylallyladenosine(37) in tRNA + (sulfur carrier)-SH + AH2 + 2 S-adenosyl-L-methionine = 2-methylsulfanyl-N(6)-dimethylallyladenosine(37) in tRNA + (sulfur carrier)-H + 5'-deoxyadenosine + L-methionine + A + S-adenosyl-L-homocysteine + 2 H(+). In terms of biological role, catalyzes the methylthiolation of N6-(dimethylallyl)adenosine (i(6)A), leading to the formation of 2-methylthio-N6-(dimethylallyl)adenosine (ms(2)i(6)A) at position 37 in tRNAs that read codons beginning with uridine. The chain is tRNA-2-methylthio-N(6)-dimethylallyladenosine synthase from Bartonella bacilliformis (strain ATCC 35685 / KC583 / Herrer 020/F12,63).